A 191-amino-acid polypeptide reads, in one-letter code: Small ribosomal subunit protein eS7z (191 aa).

Met-1 carries the N-acetylmethionine modification. A coiled-coil region spans residues 15–50; it reads ELSELDEQVAQAFFDLENTNQELKSELKDLYVNSAV.

Belongs to the eukaryotic ribosomal protein eS7 family.

The protein is Small ribosomal subunit protein eS7z (RPS7A) of Arabidopsis thaliana (Mouse-ear cress).